The primary structure comprises 432 residues: Glutamate-1-semialdehyde 2,1-aminomutase (432 aa).

N6-(pyridoxal phosphate)lysine is present on lysine 272.

Belongs to the class-III pyridoxal-phosphate-dependent aminotransferase family. HemL subfamily. Homodimer. Pyridoxal 5'-phosphate is required as a cofactor.

Its subcellular location is the cytoplasm. The catalysed reaction is (S)-4-amino-5-oxopentanoate = 5-aminolevulinate. It functions in the pathway porphyrin-containing compound metabolism; protoporphyrin-IX biosynthesis; 5-aminolevulinate from L-glutamyl-tRNA(Glu): step 2/2. The protein operates within porphyrin-containing compound metabolism; chlorophyll biosynthesis. The chain is Glutamate-1-semialdehyde 2,1-aminomutase from Picosynechococcus sp. (strain ATCC 27264 / PCC 7002 / PR-6) (Agmenellum quadruplicatum).